Reading from the N-terminus, the 162-residue chain is Selenoprotein F (162 aa).

An N-terminal signal peptide occupies residues M1–A28. U93 is a non-standard amino acid (selenocysteine).

The protein belongs to the selenoprotein M/F family. As to quaternary structure, forms a tight complex with UGGT1/UGCGL1. Interacts with UGGT2/UGCGL2. Interacts with RDH11.

Its subcellular location is the endoplasmic reticulum lumen. Its function is as follows. May be involved in redox reactions associated with the formation of disulfide bonds. May contribute to the quality control of protein folding in the endoplasmic reticulum. May regulate protein folding by enhancing the catalytic activity of UGGT1/UGCGL1 and UGGT2/UGCGL2. In Bos taurus (Bovine), this protein is Selenoprotein F.